The primary structure comprises 488 residues: Bifunctional protein HldE (488 aa).

The ribokinase stretch occupies residues Met1–Pro327. Asn201–Glu204 contacts ATP. The active site involves Asp272. The segment at Phe354 to Gly488 is cytidylyltransferase.

The protein in the N-terminal section; belongs to the carbohydrate kinase PfkB family. This sequence in the C-terminal section; belongs to the cytidylyltransferase family. In terms of assembly, homodimer.

It catalyses the reaction D-glycero-beta-D-manno-heptose 7-phosphate + ATP = D-glycero-beta-D-manno-heptose 1,7-bisphosphate + ADP + H(+). The catalysed reaction is D-glycero-beta-D-manno-heptose 1-phosphate + ATP + H(+) = ADP-D-glycero-beta-D-manno-heptose + diphosphate. Its pathway is nucleotide-sugar biosynthesis; ADP-L-glycero-beta-D-manno-heptose biosynthesis; ADP-L-glycero-beta-D-manno-heptose from D-glycero-beta-D-manno-heptose 7-phosphate: step 1/4. The protein operates within nucleotide-sugar biosynthesis; ADP-L-glycero-beta-D-manno-heptose biosynthesis; ADP-L-glycero-beta-D-manno-heptose from D-glycero-beta-D-manno-heptose 7-phosphate: step 3/4. Catalyzes the phosphorylation of D-glycero-D-manno-heptose 7-phosphate at the C-1 position to selectively form D-glycero-beta-D-manno-heptose-1,7-bisphosphate. Functionally, catalyzes the ADP transfer from ATP to D-glycero-beta-D-manno-heptose 1-phosphate, yielding ADP-D-glycero-beta-D-manno-heptose. The polypeptide is Bifunctional protein HldE (Caulobacter sp. (strain K31)).